Reading from the N-terminus, the 110-residue chain is MEIEKTNRMNALFEFYAALLTDKQMNYIELYYADDYSLAEIAEEFDVSRQAVYDNIKRTEKILEDYEMKLHMYSDYVVRSEIFDAIMKKYPNDPYLQNKISILTTIDNRD.

This sequence belongs to the UPF0122 family.

Functionally, might take part in the signal recognition particle (SRP) pathway. This is inferred from the conservation of its genetic proximity to ftsY/ffh. May be a regulatory protein. The sequence is that of UPF0122 protein SMU_1061 (ylxM) from Streptococcus mutans serotype c (strain ATCC 700610 / UA159).